The following is a 674-amino-acid chain: MTNKSSLKNNRKGVASNTLSGAEQANIGSSAMPDTNSTGPFSSVSSLDTPVVRKSTSPTGSQTKSIMNASGTSGAVVSNTPEPGLKRIPTVTFSDPKLGSLRSDVEQTPPNQVARQSSEKKATSVHIAAEGANQGRNLKDINTKVPKDGEASASSFSTPTSILSNADMGNNISSLLAKKLSFTGGTDSILNSDNSSDSPRKEHPHFYVEDPLHTPSVRSRSNSTSPRPSVVVNTFNPINIEREGSISKTGEPTLLESVLEEAMSPNAVSNPLKRENIMTNMDPRLPQDDGKLHVLFGATGSLSVFKLKHMIRKLEEIYGRDKICIQVILTNSATKFFAMKYMRKNKKQHNSIDTSFNSTNSNAGNITGNKKKVASLEKFSIQKTSSNSAASQTNNKQEEEKQMASTTGFPSTLGGSRTYSNSSNVVSQHPQIELPAHIQFWTDQDEWDVWRQRTDPVLHIELRRWADILVVAPLTANTLAKIALGLCDNLLTSVIRAWNPTFPIFLAPSMGSGTFNSIMTKKHFRIIQEEMPWVTVFKPSEKVMGINGDIGLSGMMDANEIVGKIVVKLGGYPDVSAGKEEEEDEDNDEEDDNKKNDTGGKDEDNDDDDDDDDDDDDDDDDDDDDDDDDDDDDDDDDDDDDDDDDDDDDDEDDEDEDEDDEGKKKEDKGGLQRS.

Disordered regions lie at residues 1-164, 190-230, 348-368, 384-426, and 575-674; these read MTNK…SILS, LNSD…RPSV, QHNSIDTSFNSTNSNAGNITG, TSSN…SNVV, and VSAG…LQRS. A compositionally biased stretch (polar residues) spans 15 to 81; sequence ASNTLSGAEQ…TSGAVVSNTP (67 aa). Residue T90 is modified to Phosphothreonine. The segment covering 106-116 has biased composition (polar residues); that stretch reads EQTPPNQVARQ. The segment covering 137 to 150 has biased composition (basic and acidic residues); it reads NLKDINTKVPKDGE. Polar residues predominate over residues 152–164; the sequence is SASSFSTPTSILS. Residues 198–212 are compositionally biased toward basic and acidic residues; it reads SPRKEHPHFYVEDPL. The segment covering 214–230 has biased composition (low complexity); sequence TPSVRSRSNSTSPRPSV. Residues 351-368 are compositionally biased toward polar residues; sequence SIDTSFNSTNSNAGNITG. A compositionally biased stretch (low complexity) spans 384–395; sequence TSSNSAASQTNN. Residues 403–426 show a composition bias toward polar residues; sequence MASTTGFPSTLGGSRTYSNSSNVV. A compositionally biased stretch (acidic residues) spans 580-591; the sequence is EEEEDEDNDEED. Residues 592-602 show a composition bias toward basic and acidic residues; the sequence is DNKKNDTGGKD. Residues 603 to 660 show a composition bias toward acidic residues; the sequence is EDNDDDDDDDDDDDDDDDDDDDDDDDDDDDDDDDDDDDDDDDDDDDDDEDDEDEDEDD. The segment covering 661–674 has biased composition (basic and acidic residues); that stretch reads EGKKKEDKGGLQRS.

This sequence belongs to the HFCD (homooligomeric flavin containing Cys decarboxylase) superfamily. In terms of assembly, interacts with the C-terminal domain of PPZ1. Component of the phosphopantothenoylcysteine decarboxylase (PPCDC) complex, a heterotrimer composed of CAB3, SIS2 and VHS3.

Component of the phosphopantothenoylcysteine decarboxylase (PPCDC) involved in the coenzyme A synthesis. Acts as an inhibitory subunit of protein phosphatase PPZ1, which is involved in many cellular processes such as G1-S transition or salt tolerance. The chain is Phosphopantothenoylcysteine decarboxylase subunit VHS3 (VHS3) from Saccharomyces cerevisiae (strain ATCC 204508 / S288c) (Baker's yeast).